Here is a 213-residue protein sequence, read N- to C-terminus: Pyrrolidone-carboxylate peptidase (213 aa).

Active-site residues include E78, C141, and H165.

Belongs to the peptidase C15 family. As to quaternary structure, homotetramer.

The protein resides in the cytoplasm. The catalysed reaction is Release of an N-terminal pyroglutamyl group from a polypeptide, the second amino acid generally not being Pro.. In terms of biological role, removes 5-oxoproline from various penultimate amino acid residues except L-proline. The chain is Pyrrolidone-carboxylate peptidase from Clostridium perfringens (strain SM101 / Type A).